Consider the following 781-residue polypeptide: Sialidase (781 aa).

The N-terminal stretch at 1-24 (MRFKNVKKTALMLAMFGMATSSNA) is a signal peptide. Arg224 serves as a coordination point for substrate. Asp250 functions as the Proton acceptor in the catalytic mechanism. BNR repeat units lie at residues 263–274 (RTSRDGGITWDT) and 585–596 (IYSDDGGSNWQT). The active site involves Glu619. Arg635 contacts substrate. A BNR 3 repeat occupies 653 to 664 (FLSKDGGITWSL). A substrate-binding site is contributed by Arg712. A BNR 4 repeat occupies 718–729 (WFSFDEGVTWKG). Residue Tyr740 is the Nucleophile of the active site.

Belongs to the glycosyl hydrolase 33 family. In terms of assembly, monomer. Ca(2+) serves as cofactor.

The protein resides in the secreted. The enzyme catalyses Hydrolysis of alpha-(2-&gt;3)-, alpha-(2-&gt;6)-, alpha-(2-&gt;8)- glycosidic linkages of terminal sialic acid residues in oligosaccharides, glycoproteins, glycolipids, colominic acid and synthetic substrates.. Cleaves the terminal sialic acid (N-acetyl neuraminic acid) from carbohydrate chains in glycoproteins providing free sialic acid which can be used as carbon and energy sources. Sialidases have been suggested to be pathogenic factors in microbial infections. Facilitates cholera toxin binding to host intestinal epithelial cells by converting cell surface polysialogangliosides to GM1 monogangliosides. The sequence is that of Sialidase (nanH) from Vibrio cholerae serotype O1 (strain ATCC 39541 / Classical Ogawa 395 / O395).